The chain runs to 180 residues: MSRVGKLPVAIPNGVTVTVTPDNVVTVKGPKGELVKAMSNKINIAVEDNSVVVTRDNDHKDVRALHGLTRALINNMVTGVNEGYVKTLELVGVGYRAQLQGKKLVLSLGFSHPVEMEAVSGVEFEVEGGTKVKVKGIDKELVGAVAADIRKWRKPEPYKGKGIKYENEVIRRKEGKTGKK.

It belongs to the universal ribosomal protein uL6 family. In terms of assembly, part of the 50S ribosomal subunit.

This protein binds to the 23S rRNA, and is important in its secondary structure. It is located near the subunit interface in the base of the L7/L12 stalk, and near the tRNA binding site of the peptidyltransferase center. The protein is Large ribosomal subunit protein uL6 of Clostridium botulinum (strain Okra / Type B1).